The following is a 538-amino-acid chain: Syncytin-1 (538 aa).

An N-terminal signal peptide occupies residues 1 to 20 (MALPYHILLFTVLLPSFTLT). Over 21–443 (APPPCRCMTS…NTGPWGLLSQ (423 aa)) the chain is Extracellular. N-linked (GlcNAc...) asparagine glycosylation is present at N169. The short motif at 186–189 (CWIC) is the CXXC element. 3 disulfide bridges follow: C186–C189, C186–C405, and C397–C404. Residues N208, N214, N234, and N281 are each glycosylated (N-linked (GlcNAc...) asparagine). The fusion peptide stretch occupies residues 320-340 (ILPFVIGAGVLGALGTGIGGI). The interval 380 to 396 (LQNRRALDLLTAERGGT) is immunosuppression. Positions 397-405 (CLFLGEECC) match the CX6CC motif. N-linked (GlcNAc...) asparagine glycosylation occurs at N409. Residues 444–464 (WMPWILPFLGPLAAIILLLLF) form a helical membrane-spanning segment. The segment at 465-484 (GPCIFNLLVNFVSSRIEAVK) is essential for the fusiogenic function. Over 465 to 538 (GPCIFNLLVN…LLRPNSAGSS (74 aa)) the chain is Cytoplasmic. The segment at 496–538 (KIYRRPLDRPASPRSDVNDIKCTPPEEISTAQPLLRPNSAGSS) is disordered.

This sequence belongs to the gamma type-C retroviral envelope protein family. HERV class-I W env subfamily. The mature envelope protein (Env) consists of a trimer of SU-TM heterodimers attached probably by a labile interchain disulfide bond. Interacts with the C-type lectin CD209/DC-SIGN. Post-translationally, specific enzymatic cleavages in vivo yield mature proteins. Envelope glycoproteins are synthesized as an inactive precursor that is heavily N-glycosylated and processed likely by furin in the Golgi to yield the mature SU and TM proteins. The cleavage site between SU and TM requires the minimal sequence [KR]-X-[KR]-R. The CXXC motif is highly conserved across a broad range of retroviral envelope proteins. It is thought to participate in the formation of a labile disulfide bond possibly with the CX6CC motif present in the transmembrane protein.

It localises to the cell membrane. The protein resides in the virion. Its function is as follows. This endogenous retroviral envelope protein has retained its original fusogenic properties and participates in trophoblast fusion and the formation of a syncytium during placenta morphogenesis. May recognize and induce fusion through binding of SLC1A4 and SLC1A5. In terms of biological role, endogenous envelope proteins may have kept, lost or modified their original function during evolution. Retroviral envelope proteins mediate receptor recognition and membrane fusion during early infection. The surface protein (SU) mediates receptor recognition, while the transmembrane protein (TM) acts as a class I viral fusion protein. The protein may have at least 3 conformational states: pre-fusion native state, pre-hairpin intermediate state, and post-fusion hairpin state. During viral and target cell membrane fusion, the coiled coil regions (heptad repeats) assume a trimer-of-hairpins structure, positioning the fusion peptide in close proximity to the C-terminal region of the ectodomain. The formation of this structure appears to drive apposition and subsequent fusion of membranes. The protein is Syncytin-1 (ERVW-1) of Gorilla gorilla gorilla (Western lowland gorilla).